The primary structure comprises 443 residues: Tubulin beta-1 chain (443 aa).

The GTP site is built by Gln11, Glu69, Ser138, Gly142, Thr143, Gly144, Asn204, and Asn226. Glu69 lines the Mg(2+) pocket. The segment at 424–443 (QYQDATAEREGEYEEDYDEA) is disordered. Residues 434–443 (GEYEEDYDEA) show a composition bias toward acidic residues.

This sequence belongs to the tubulin family. In terms of assembly, dimer of alpha and beta chains. A typical microtubule is a hollow water-filled tube with an outer diameter of 25 nm and an inner diameter of 15 nM. Alpha-beta heterodimers associate head-to-tail to form protofilaments running lengthwise along the microtubule wall with the beta-tubulin subunit facing the microtubule plus end conferring a structural polarity. Microtubules usually have 13 protofilaments but different protofilament numbers can be found in some organisms and specialized cells. Mg(2+) serves as cofactor.

The protein resides in the cytoplasm. The protein localises to the cytoskeleton. Its function is as follows. Tubulin is the major constituent of microtubules, a cylinder consisting of laterally associated linear protofilaments composed of alpha- and beta-tubulin heterodimers. Microtubules grow by the addition of GTP-tubulin dimers to the microtubule end, where a stabilizing cap forms. Below the cap, tubulin dimers are in GDP-bound state, owing to GTPase activity of alpha-tubulin. The chain is Tubulin beta-1 chain (TUBB1) from Anemia phyllitidis (Fern).